Here is a 552-residue protein sequence, read N- to C-terminus: Leucine-rich repeat-containing protein 31 (552 aa).

Residues 1 to 65 (MSQTRKKTSS…SETAKPLSSE (65 aa)) are disordered. The segment covering 31–41 (ESRKEDNDLKT) has biased composition (basic and acidic residues). Polar residues predominate over residues 42-58 (SDSQPSDWIQKTATSET). LRR repeat units follow at residues 227–246 (SLEV…LNSI), 255–275 (NLKV…KILD), 283–293 (ELRKLDLSCNK), 311–331 (HLQV…MSLT), 339–360 (NLQE…NLLS), 367–387 (ALKS…TALA), 395–415 (ALEV…KLLL), 423–443 (SLQV…ALLA), and 453–475 (KLQK…MFCQ).

The protein is Leucine-rich repeat-containing protein 31 (LRRC31) of Homo sapiens (Human).